Here is a 395-residue protein sequence, read N- to C-terminus: ATP phosphoribosyltransferase regulatory subunit (395 aa).

It belongs to the class-II aminoacyl-tRNA synthetase family. HisZ subfamily. Heteromultimer composed of HisG and HisZ subunits.

It localises to the cytoplasm. The protein operates within amino-acid biosynthesis; L-histidine biosynthesis; L-histidine from 5-phospho-alpha-D-ribose 1-diphosphate: step 1/9. Its function is as follows. Required for the first step of histidine biosynthesis. May allow the feedback regulation of ATP phosphoribosyltransferase activity by histidine. The protein is ATP phosphoribosyltransferase regulatory subunit of Pseudomonas syringae pv. syringae (strain B728a).